The chain runs to 483 residues: Glutamyl-tRNA(Gln) amidotransferase subunit A (483 aa).

Active-site charge relay system residues include Lys76 and Ser151. Catalysis depends on Ser175, which acts as the Acyl-ester intermediate.

Belongs to the amidase family. GatA subfamily. In terms of assembly, heterotrimer of A, B and C subunits.

It catalyses the reaction L-glutamyl-tRNA(Gln) + L-glutamine + ATP + H2O = L-glutaminyl-tRNA(Gln) + L-glutamate + ADP + phosphate + H(+). Functionally, allows the formation of correctly charged Gln-tRNA(Gln) through the transamidation of misacylated Glu-tRNA(Gln) in organisms which lack glutaminyl-tRNA synthetase. The reaction takes place in the presence of glutamine and ATP through an activated gamma-phospho-Glu-tRNA(Gln). This Nitrosococcus oceani (strain ATCC 19707 / BCRC 17464 / JCM 30415 / NCIMB 11848 / C-107) protein is Glutamyl-tRNA(Gln) amidotransferase subunit A.